The primary structure comprises 397 residues: MGVTKTPLYETLNESSAVALAVKLGLFPSKSTLTCQEIGDGNLNYVFHIYDQEHDRALIIKQAVPYAKVVGESWPLTIDRARIESSALIRQGEHVPHLVPRVFYSDTEMAVTVMEDLSHLKIARKGLIEGENYPHLSQHIGEFLGKTLFYSSDYALEPKVKKQLVKQFTNPELCDITERLVFTDPFFDHDTNDFEEELRPFVEKLWNNDSVKIEAAKLKKSFLTSAETLIHGDLHTGSIFASEHETKVIDPEFAFYGPIGFDVGQFIANLFLNALSRDGADREPLYEHVNQVWETFEETFSEAWQKDSLDVYANIDGYLTDTLSHIFEEAIGFAGCELIRRTIGLAHVADLDTIVPFDKRIGRKRLALETGTAFIEKRSEFKTITDVIELFKLLVKE.

ATP contacts are provided by residues Asn-44, Lys-61, and 115 to 117; that span reads EDL. Asp-233 lines the substrate pocket. 250–252 provides a ligand contact to ATP; that stretch reads DPE. Position 340 (Arg-340) interacts with substrate.

This sequence belongs to the methylthioribose kinase family. In terms of assembly, homodimer.

The catalysed reaction is 5-(methylsulfanyl)-D-ribose + ATP = 5-(methylsulfanyl)-alpha-D-ribose 1-phosphate + ADP + H(+). The protein operates within amino-acid biosynthesis; L-methionine biosynthesis via salvage pathway; S-methyl-5-thio-alpha-D-ribose 1-phosphate from S-methyl-5'-thioadenosine (hydrolase route): step 2/2. Catalyzes the phosphorylation of methylthioribose into methylthioribose-1-phosphate. In Bacillus subtilis (strain 168), this protein is Methylthioribose kinase (mtnK).